We begin with the raw amino-acid sequence, 256 residues long: Rano class II histocompatibility antigen, B alpha chain (256 aa).

The N-terminal stretch at 1–23 (MPLSRALILGVLALTTMLSPCGG) is a signal peptide. The interval 24-111 (QDDIEADHVG…KRSNSTPAVN (88 aa)) is alpha-1. Topologically, residues 24-218 (QDDIEADHVG…IPAPMSELTE (195 aa)) are extracellular. The 99-residue stretch at 108-206 (PAVNEVPEAT…LDEPVLRHWE (99 aa)) folds into the Ig-like C1-type domain. Positions 112-205 (EVPEATVFSK…SLDEPVLRHW (94 aa)) are alpha-2. Residues Cys-134 and Cys-190 are joined by a disulfide bond. Residue Asn-145 is glycosylated (N-linked (GlcNAc...) asparagine). The tract at residues 206-218 (EPEIPAPMSELTE) is connecting peptide. A helical transmembrane segment spans residues 219 to 244 (TVVCALGLSVGLVGIVVGTIFIIQGL). Residues 245–256 (RSVAPSRHPGPL) lie on the Cytoplasmic side of the membrane.

It belongs to the MHC class II family.

It localises to the membrane. This is Rano class II histocompatibility antigen, B alpha chain (RT1-Ba) from Rattus norvegicus (Rat).